A 516-amino-acid polypeptide reads, in one-letter code: Coiled-coil domain-containing protein 82 (516 aa).

The segment covering 1–13 (MVHARRHETRKNS) has biased composition (basic residues). The segment at 1–265 (MVHARRHETR…DYGDAENEDD (265 aa)) is disordered. Acidic residues predominate over residues 38 to 62 (DSDEELDSDEEIGSDEDLDGGESID). Over residues 78–96 (IPEKETELNLIKVESERSN) the composition is skewed to basic and acidic residues. The span at 98-107 (KCHMNTSSSS) shows a compositional bias: polar residues. A compositionally biased stretch (basic and acidic residues) spans 113-135 (MNKTKHNDLPDDEAHPGQAEGHH). Phosphoserine occurs at positions 170 and 194. Thr202 carries the phosphothreonine modification. A coiled-coil region spans residues 204–232 (EKSPAARKREYHQKLQELCERSRQKQRHN). Residues 215-226 (HQKLQELCERSR) are compositionally biased toward basic and acidic residues. A compositionally biased stretch (acidic residues) spans 248 to 265 (TDEDEDDDDYGDAENEDD). The residue at position 301 (Ser301) is a Phosphoserine.

The sequence is that of Coiled-coil domain-containing protein 82 (Ccdc82) from Rattus norvegicus (Rat).